Consider the following 567-residue polypeptide: MRYDTYGDSAPIKKTGAGYDVPEGVDIRGRYDGEFAKILTRDALQFVADLQREFRNRIRYAIECRKEAKSRYNAGALPGFEHPATKYIREGEWTCAPVPPAVADRKVEITGPVERKMIINALNSGAKVFMADFEDALSPSWENLMRGQVNLRDAVNGTISFHDKARNRVYKLNDQIAKLFVRPRGWHLPEAHILIDGEPATGCLVDFGLYFYHNYAAFRRNQGAGYGPFFYLPKMEHSREAKIWNCVFEKAEKMAGIERGSIRATVLIETLPAVFQMNEILYELRDHSVGLNCGRWDYIFSYVKTFQAHPDRPLPDRVQVGMTQHFMKSYSDLLVWTCHRRGVHAMGGMAAQIPIRDDPAANKAALELVRKDKLREVKAGHDGTWAAHPGLIPACMEVFANNMGNTPHQIQAMKREDAANITEEDLIQRPRGVRTLEGLRLNTRVGIQYLAAWLTGTGSVPLYNLMEDAATAEISRVQNWQWLKYGVELDGDGLGVKVTFDLLGRVVEDEMARIEREVGKEKFKKGMYKEACKMFVRQCAAPTLDDFLTLDAYNNIVIHYPKGSSRL.

The active-site Proton acceptor is Arg182. Asp468 (proton donor) is an active-site residue. The short motif at 565 to 567 is the Microbody targeting signal element; it reads SRL.

The protein belongs to the malate synthase family.

It localises to the glyoxysome. The enzyme catalyses glyoxylate + acetyl-CoA + H2O = (S)-malate + CoA + H(+). Its pathway is carbohydrate metabolism; glyoxylate cycle; (S)-malate from isocitrate: step 2/2. The protein is Malate synthase, glyoxysomal of Ricinus communis (Castor bean).